Consider the following 520-residue polypeptide: Pleckstrin homology domain-containing family A member 8 (520 aa).

The 93-residue stretch at methionine 1–alanine 93 folds into the PH domain. Threonine 139 carries the phosphothreonine modification. Position 145 is a phosphoserine (serine 145). Threonine 153 carries the post-translational modification Phosphothreonine. The span at isoleucine 255–glutamine 268 shows a compositional bias: polar residues. Residues isoleucine 255–glutamate 303 are disordered. Basic and acidic residues predominate over residues glutamate 270–leucine 287. Positions threonine 311–valine 520 are glycolipid transfer protein homology domain.

As to quaternary structure, homodimer. Interacts with ARF1; the interaction together with phosphatidylinositol 4-phosphate binding is required for FAPP2 GlcCer transfer ability.

It is found in the golgi apparatus. It localises to the trans-Golgi network membrane. Its subcellular location is the membrane. Cargo transport protein that is required for apical transport from the trans-Golgi network (TGN). Transports AQP2 from the trans-Golgi network (TGN) to sites of AQP2 phosphorylation. Mediates the non-vesicular transport of glucosylceramide (GlcCer) from the trans-Golgi network (TGN) to the plasma membrane and plays a pivotal role in the synthesis of complex glycosphingolipids. Binding of both phosphatidylinositol 4-phosphate (PIP) and ARF1 are essential for the GlcCer transfer ability. Also required for primary cilium formation, possibly by being involved in the transport of raft lipids to the apical membrane, and for membrane tubulation. The polypeptide is Pleckstrin homology domain-containing family A member 8 (Plekha8) (Rattus norvegicus (Rat)).